Here is a 278-residue protein sequence, read N- to C-terminus: Thiazole synthase (278 aa).

The Schiff-base intermediate with DXP role is filled by lysine 109. Residues glycine 170, 197-198 (AG), and 219-220 (NT) contribute to the 1-deoxy-D-xylulose 5-phosphate site.

It belongs to the ThiG family. In terms of assembly, homotetramer. Forms heterodimers with either ThiH or ThiS.

The protein localises to the cytoplasm. The catalysed reaction is [ThiS sulfur-carrier protein]-C-terminal-Gly-aminoethanethioate + 2-iminoacetate + 1-deoxy-D-xylulose 5-phosphate = [ThiS sulfur-carrier protein]-C-terminal Gly-Gly + 2-[(2R,5Z)-2-carboxy-4-methylthiazol-5(2H)-ylidene]ethyl phosphate + 2 H2O + H(+). The protein operates within cofactor biosynthesis; thiamine diphosphate biosynthesis. Catalyzes the rearrangement of 1-deoxy-D-xylulose 5-phosphate (DXP) to produce the thiazole phosphate moiety of thiamine. Sulfur is provided by the thiocarboxylate moiety of the carrier protein ThiS. In vitro, sulfur can be provided by H(2)S. The protein is Thiazole synthase of Cupriavidus taiwanensis (strain DSM 17343 / BCRC 17206 / CCUG 44338 / CIP 107171 / LMG 19424 / R1) (Ralstonia taiwanensis (strain LMG 19424)).